Reading from the N-terminus, the 419-residue chain is Endochitinase 2 (419 aa).

Positions 1-18 (MHHLRALVGVGLAGLAAG) are cleaved as a signal peptide. The region spanning 35–343 (AQNVVYWGQN…QQAKSILVNG (309 aa)) is the GH18 domain. The N-linked (GlcNAc...) asparagine glycan is linked to Asn-153. Glu-173 serves as the catalytic Proton donor. Residues Asn-237 and Asn-256 are each glycosylated (N-linked (GlcNAc...) asparagine). The interval 343-390 (GAPCPSSGPPSSTPATAPAPTATTMPSSTSVSSPTASPTGGTVPQWGQ) is disordered. A compositionally biased stretch (low complexity) spans 355–384 (TPATAPAPTATTMPSSTSVSSPTASPTGGT). The CBM1 domain occupies 383-419 (GTVPQWGQCGGEGYSGPTQCVPPYQCVKQGDWWSSCR).

Belongs to the glycosyl hydrolase 18 family. Chitinase class III subfamily.

The protein resides in the secreted. It catalyses the reaction Random endo-hydrolysis of N-acetyl-beta-D-glucosaminide (1-&gt;4)-beta-linkages in chitin and chitodextrins.. Functionally, secreted chitinase involved in the degradation of chitin, a component of the cell walls of fungi and exoskeletal elements of some animals (including worms and arthropods). Participates in the infection process and directly acts in the penetration process of the host cuticle. The polypeptide is Endochitinase 2 (chi2) (Metarhizium anisopliae (Entomophthora anisopliae)).